The chain runs to 74 residues: MNTAGRLLLLCLVLGLVFESLGIPVADDLEADRDTDPDEKDPSVHNYWRNVNCGGVPCKFGCCREDRCREIDCD.

Positions 1-22 are cleaved as a signal peptide; that stretch reads MNTAGRLLLLCLVLGLVFESLG. A propeptide spanning residues 23-49 is cleaved from the precursor; the sequence is IPVADDLEADRDTDPDEKDPSVHNYWR. 3 disulfides stabilise this stretch: cysteine 53–cysteine 63, cysteine 58–cysteine 68, and cysteine 62–cysteine 73.

As to expression, expressed by the venom duct.

It localises to the secreted. In terms of biological role, probable toxin with unknown function. Does not produce any changes in intracellular calcium levels in mouse dorsal root ganglion cells. In vivo, does not produce behavioral changes when intracranially injected into mice. The sequence is that of Conotoxin Vc7.2 from Conus victoriae (Queen Victoria cone).